The chain runs to 279 residues: MDEDETTYPEALRRLLIETPAAIWQLDDESAQCNNCGGPFTWFRRRHHCRWCGKLFCYNCCNSFAKLPVSSVSVDPTEDLIPQDMFIRDPDFLANDNDDDNDSQDSSWINVRVCVNCRQQLSELKELDLPYPITTCLNDDTTTRSNNQVIQSSCGNNLQRIEEPDDFVECPVCYAPLSSFKTLSERESHVANCLSNNSSSPRNMTEFLKHARRYISMQLSETSPCLGQECIICFEEFAAGDRVARIEYCLCIFHLKCYRDWLSTGAAGCPVHAATLHLS.

An FYVE-type zinc finger spans residues 27–122; the sequence is DDESAQCNNC…VCVNCRQQLS (96 aa). 8 residues coordinate Zn(2+): Cys-33, Cys-36, Cys-49, Cys-52, Cys-57, Cys-60, Cys-114, and Cys-117. Ser-200 is subject to Phosphoserine. Residues 230–273 form an RING-type; atypical zinc finger; sequence CIICFEEFAAGDRVARIEYCLCIFHLKCYRDWLSTGAAGCPVHA.

Its subcellular location is the cytoplasm. It is found in the nucleus. The protein resides in the endosome membrane. The protein localises to the vacuole membrane. It catalyses the reaction S-ubiquitinyl-[E2 ubiquitin-conjugating enzyme]-L-cysteine + [acceptor protein]-L-lysine = [E2 ubiquitin-conjugating enzyme]-L-cysteine + N(6)-ubiquitinyl-[acceptor protein]-L-lysine.. Its pathway is protein modification; protein ubiquitination. In terms of biological role, functions as an E3 ubiquitin-protein ligase. Binds phospholipid vesicles containing phosphatidylinositol 3-phosphate. In Schizosaccharomyces pombe (strain 972 / ATCC 24843) (Fission yeast), this protein is Putative E3 ubiquitin-protein ligase C36B7.05c.